The sequence spans 342 residues: Putative TPR repeat-containing protein R856 (342 aa).

TPR repeat units lie at residues 36–69 (VHIF…IFNG), 77–110 (FYSV…IKDM), 119–152 (VYAL…NEKL), 161–194 (AFVL…YREK), 203–236 (AFTI…FNKI), 245–278 (AFSL…YKNV), and 291–324 (ASCL…FEST).

The polypeptide is Putative TPR repeat-containing protein R856 (Acanthamoeba polyphaga mimivirus (APMV)).